A 622-amino-acid polypeptide reads, in one-letter code: Polypeptide N-acetylgalactosaminyltransferase 18 (622 aa).

The Cytoplasmic segment spans residues 1–12; the sequence is MVCTRKTKTLVS. A helical; Signal-anchor for type II membrane protein transmembrane segment spans residues 13–35; that stretch reads TCVILSGMTNIICLLYVGWVTNY. The Lumenal portion of the chain corresponds to 36-622; it reads IASVYVRGQE…ITNVLRSLVS (587 aa). 5 disulfides stabilise this stretch: C144–C392, C383–C462, C497–C513, C545–C558, and C586–C606. A glycan (N-linked (GlcNAc...) asparagine) is linked at N146. Residues 153–267 are catalytic subdomain A; that stretch reads LPEVSIVFIF…VGWAEPVLTR (115 aa). D194 lines the substrate pocket. N195 is a glycosylation site (N-linked (GlcNAc...) asparagine). Residues D251 and H253 each contribute to the Mn(2+) site. N320 carries N-linked (GlcNAc...) asparagine glycosylation. Residues 324–400 are catalytic subdomain B; sequence PIRSPALIGC…PCSRIAHIER (77 aa). H397 contributes to the Mn(2+) binding site. Positions 400 and 405 each coordinate substrate. A Ricin B-type lectin domain is found at 484-614; that stretch reads AYGVLQNSLK…KCSGQHWTIT (131 aa).

This sequence belongs to the glycosyltransferase 2 family. GalNAc-T subfamily. Requires Mn(2+) as cofactor.

The protein resides in the golgi apparatus membrane. The enzyme catalyses L-seryl-[protein] + UDP-N-acetyl-alpha-D-galactosamine = a 3-O-[N-acetyl-alpha-D-galactosaminyl]-L-seryl-[protein] + UDP + H(+). The catalysed reaction is L-threonyl-[protein] + UDP-N-acetyl-alpha-D-galactosamine = a 3-O-[N-acetyl-alpha-D-galactosaminyl]-L-threonyl-[protein] + UDP + H(+). The protein operates within protein modification; protein glycosylation. Functionally, catalyzes the initial reaction in O-linked oligosaccharide biosynthesis, the transfer of an N-acetyl-D-galactosamine (GalNAc) residue from UDP-GalNAc to a serine or threonine residue on the protein receptor. This Mus musculus (Mouse) protein is Polypeptide N-acetylgalactosaminyltransferase 18 (Galnt18).